The following is a 431-amino-acid chain: Lipoyl synthase 2, mitochondrial (431 aa).

Positions 21–43 (SPLGKLQEERGEGVAKDPKKDKQ) are disordered. Residues 26 to 40 (LQEERGEGVAKDPKK) are compositionally biased toward basic and acidic residues. Residues Cys-127, Cys-132, Cys-138, Cys-159, Cys-163, Cys-166, and Ser-375 each contribute to the [4Fe-4S] cluster site. In terms of domain architecture, Radical SAM core spans 142–364 (DEEEGTATAT…EEEAMAMGFL (223 aa)).

Belongs to the radical SAM superfamily. Lipoyl synthase family. It depends on [4Fe-4S] cluster as a cofactor.

The protein resides in the mitochondrion. The enzyme catalyses [[Fe-S] cluster scaffold protein carrying a second [4Fe-4S](2+) cluster] + N(6)-octanoyl-L-lysyl-[protein] + 2 oxidized [2Fe-2S]-[ferredoxin] + 2 S-adenosyl-L-methionine + 4 H(+) = [[Fe-S] cluster scaffold protein] + N(6)-[(R)-dihydrolipoyl]-L-lysyl-[protein] + 4 Fe(3+) + 2 hydrogen sulfide + 2 5'-deoxyadenosine + 2 L-methionine + 2 reduced [2Fe-2S]-[ferredoxin]. It participates in protein modification; protein lipoylation via endogenous pathway; protein N(6)-(lipoyl)lysine from octanoyl-[acyl-carrier-protein]: step 2/2. Its function is as follows. Catalyzes the radical-mediated insertion of two sulfur atoms into the C-6 and C-8 positions of the octanoyl moiety bound to the lipoyl domains of lipoate-dependent enzymes, thereby converting the octanoylated domains into lipoylated derivatives. The polypeptide is Lipoyl synthase 2, mitochondrial (Trypanosoma cruzi (strain CL Brener)).